We begin with the raw amino-acid sequence, 184 residues long: Ras-related protein Rap-1b (184 aa).

10 to 18 (GSGGVGKSA) contacts GTP. Residues 25–67 (QGIFVEKYDPTIEDSYRKQVEVDAQQCMLEILDTAGTEQFTAM) form an interaction with KRIT1 region. The short motif at 32 to 40 (YDPTIEDSY) is the Effector region element. GTP contacts are provided by residues 57–61 (DTAGT), 116–119 (NKCD), and 147–149 (SAK). At serine 179 the chain carries Phosphoserine; by PKA. At cysteine 181 the chain carries Cysteine methyl ester. Cysteine 181 is lipidated: S-geranylgeranyl cysteine. The propeptide at 182-184 (QLL) is removed in mature form.

As to quaternary structure, heterodimer with RAP1GAP. Interacts with EPAC2. Interacts with SGSM1. Interacts with SGSM2. Interacts with SGSM3. Interacts with KRIT1. Interacts with RAP1GDS1.

It localises to the cell membrane. It is found in the cytoplasm. The protein localises to the cytosol. Its subcellular location is the cell junction. The enzyme catalyses GTP + H2O = GDP + phosphate + H(+). With respect to regulation, activated by guanine nucleotide-exchange factor (GEF) EPAC2 in a cAMP-dependent manner. Functionally, GTP-binding protein that possesses intrinsic GTPase activity. Contributes to the polarizing activity of KRIT1 and CDH5 in the establishment and maintenance of correct endothelial cell polarity and vascular lumen. Required for the localization of phosphorylated PRKCZ, PARD3 and TIAM1 to the cell junction. Plays a role in the establishment of basal endothelial barrier function. This Bos taurus (Bovine) protein is Ras-related protein Rap-1b (RAP1B).